Here is a 250-residue protein sequence, read N- to C-terminus: GILT-like protein 1 (250 aa).

The first 21 residues, 1-21, serve as a signal peptide directing secretion; sequence MSHKIAAVCLLMSCLIATAYS. Asn-157 carries N-linked (GlcNAc...) asparagine glycosylation.

It belongs to the GILT family. Post-translationally, conjugated to URM1, a ubiquitin-like protein.

Its subcellular location is the secreted. Involved in the immune response to bacterial infection. This is GILT-like protein 1 from Drosophila melanogaster (Fruit fly).